A 468-amino-acid polypeptide reads, in one-letter code: 6-phospho-beta-galactosidase (468 aa).

Glutamine 19, histidine 116, asparagine 159, glutamate 160, and asparagine 297 together coordinate D-galactose 6-phosphate. Residue glutamate 160 is the Proton donor of the active site. The active-site Nucleophile is glutamate 375. Residues serine 428, tryptophan 429, lysine 435, and tyrosine 437 each coordinate D-galactose 6-phosphate.

The protein belongs to the glycosyl hydrolase 1 family.

It carries out the reaction a 6-phospho-beta-D-galactoside + H2O = D-galactose 6-phosphate + an alcohol. It functions in the pathway carbohydrate metabolism; lactose degradation; D-galactose 6-phosphate and beta-D-glucose from lactose 6-phosphate: step 1/1. The protein is 6-phospho-beta-galactosidase of Streptococcus gordonii (strain Challis / ATCC 35105 / BCRC 15272 / CH1 / DL1 / V288).